Here is a 323-residue protein sequence, read N- to C-terminus: Type II restriction enzyme BsoBI (323 aa).

The Mg(2+) site is built by D212, E240, and K242.

In terms of assembly, homodimer.

It carries out the reaction Endonucleolytic cleavage of DNA to give specific double-stranded fragments with terminal 5'-phosphates.. A P subtype restriction enzyme that recognizes the double-stranded sequence 5'-CYCGRG-3' and cleaves after C-1. The sequence is that of Type II restriction enzyme BsoBI from Geobacillus stearothermophilus (Bacillus stearothermophilus).